The sequence spans 1071 residues: DNA-directed RNA polymerase subunit beta (1071 aa).

The protein belongs to the RNA polymerase beta chain family. In terms of assembly, in plastids the minimal PEP RNA polymerase catalytic core is composed of four subunits: alpha, beta, beta', and beta''. When a (nuclear-encoded) sigma factor is associated with the core the holoenzyme is formed, which can initiate transcription.

The protein localises to the plastid. It is found in the chloroplast. The enzyme catalyses RNA(n) + a ribonucleoside 5'-triphosphate = RNA(n+1) + diphosphate. In terms of biological role, DNA-dependent RNA polymerase catalyzes the transcription of DNA into RNA using the four ribonucleoside triphosphates as substrates. In Anthoceros angustus (Hornwort), this protein is DNA-directed RNA polymerase subunit beta.